The following is a 396-amino-acid chain: MTSANKSNIPALLALAVSAFAIGTTEFISVGLLPLIADDLDIPVTTAGLTVSLYALGVTFGAPILTSLTSSMSRKTLLLWIMFIFIAGNTMAATASSIGILLAARVISAFSHGVFMSIGSTIAADIVPEDKRASAISIMFTGLTVATVTGVPFGTFIGQQFGWRFAFMVIIAVGIIAFITNGILVPSKLRKGTKTTMRDQLKLVTNSRLLLLFVITALGYGGTFVVFTYLSPLLQEVTGFKAGTVAVILLGYGIAIAIGNMIGGKLSNRNPIAALFYMFIVQAIVLFVLTFTAPYQAAGLITILCMGLLAFMNVPGLQVYVVMLAERFVPSAVDVASAMNIAAFNAGIALGSYLGGVITDSIGLIHTAWIGGLMVVGAVILTGWSRLMEKRDRQEA.

12 helical membrane-spanning segments follow: residues 12–32 (LLAL…SVGL), 48–68 (GLTV…LTSL), 78–98 (LLWI…ASSI), 106–126 (VISA…AADI), 138–158 (IMFT…TFIG), 165–185 (FAFM…GILV), 209–229 (LLLL…VFTY), 242–262 (AGTV…GNMI), 271–291 (PIAA…VLTF), 297–317 (AAGL…VPGL), 338–358 (AMNI…GGVI), and 362–382 (IGLI…VILT).

This sequence belongs to the major facilitator superfamily.

It is found in the cell membrane. This is an uncharacterized protein from Bacillus subtilis (strain 168).